The following is a 397-amino-acid chain: Monooxygenase 1 (397 aa).

The protein belongs to the 3-hydroxybenzoate 6-hydroxylase family. As to quaternary structure, monomer. FAD is required as a cofactor. As to expression, expressed in seedlings, roots, leaves, flowers and siliques.

This Arabidopsis thaliana (Mouse-ear cress) protein is Monooxygenase 1.